The primary structure comprises 390 residues: Anhydro-N-acetylmuramic acid kinase (390 aa).

ATP is bound at residue 9–16; sequence GTSLDGID.

It belongs to the anhydro-N-acetylmuramic acid kinase family.

It catalyses the reaction 1,6-anhydro-N-acetyl-beta-muramate + ATP + H2O = N-acetyl-D-muramate 6-phosphate + ADP + H(+). The protein operates within amino-sugar metabolism; 1,6-anhydro-N-acetylmuramate degradation. It functions in the pathway cell wall biogenesis; peptidoglycan recycling. In terms of biological role, catalyzes the specific phosphorylation of 1,6-anhydro-N-acetylmuramic acid (anhMurNAc) with the simultaneous cleavage of the 1,6-anhydro ring, generating MurNAc-6-P. Is required for the utilization of anhMurNAc either imported from the medium or derived from its own cell wall murein, and thus plays a role in cell wall recycling. In Bacillus cereus (strain ATCC 14579 / DSM 31 / CCUG 7414 / JCM 2152 / NBRC 15305 / NCIMB 9373 / NCTC 2599 / NRRL B-3711), this protein is Anhydro-N-acetylmuramic acid kinase.